Here is a 191-residue protein sequence, read N- to C-terminus: Amelogenin, X isoform (191 aa).

An N-terminal signal peptide occupies residues Met1–Ala16. Phosphoserine is present on Ser32. The span at Ile95–Pro117 shows a compositional bias: low complexity. Residues Ile95–Asp191 are disordered. A compositionally biased stretch (pro residues) spans Asn118–Leu171.

This sequence belongs to the amelogenin family. As to quaternary structure, interacts with KRT5. Phosphorylated by FAM20C in vitro.

Its subcellular location is the secreted. The protein localises to the extracellular space. It is found in the extracellular matrix. In terms of biological role, plays a role in biomineralization. Seems to regulate the formation of crystallites during the secretory stage of tooth enamel development. Thought to play a major role in the structural organization and mineralization of developing enamel. The chain is Amelogenin, X isoform (AMELX) from Homo sapiens (Human).